Reading from the N-terminus, the 97-residue chain is Anti-sigma-YlaC factor YlaD (97 aa).

His29, Cys33, and Cys36 together coordinate Zn(2+). Residues 71–93 (YYGLLIMKAACWFGAAVAMMLII) traverse the membrane as a helical segment.

The protein belongs to the zinc-associated anti-sigma factor (ZAS) superfamily. The cofactor is Zn(2+).

Its subcellular location is the cell membrane. In terms of biological role, anti-sigma factor for YlaC. In Bacillus subtilis (strain 168), this protein is Anti-sigma-YlaC factor YlaD (ylaD).